The chain runs to 470 residues: Ribosomal protein uS12 methylthiotransferase RimO (470 aa).

Residues 1–27 (MPCQAPHSDSNVKNPSEATNQKDHSPR) are disordered. Over residues 7-19 (HSDSNVKNPSEAT) the composition is skewed to polar residues. Residues 26–141 (PRVGFVSLGC…VMQAVHTHLP (116 aa)) enclose the MTTase N-terminal domain. The [4Fe-4S] cluster site is built by C35, C71, C100, C172, C176, and C179. Residues 158 to 399 (LTPKHYAYLK…MEVAEAVSAR (242 aa)) enclose the Radical SAM core domain. The region spanning 402-470 (QRKVGQTLRV…ADGHDLWGEV (69 aa)) is the TRAM domain.

Belongs to the methylthiotransferase family. RimO subfamily. It depends on [4Fe-4S] cluster as a cofactor.

It localises to the cytoplasm. It carries out the reaction L-aspartate(89)-[ribosomal protein uS12]-hydrogen + (sulfur carrier)-SH + AH2 + 2 S-adenosyl-L-methionine = 3-methylsulfanyl-L-aspartate(89)-[ribosomal protein uS12]-hydrogen + (sulfur carrier)-H + 5'-deoxyadenosine + L-methionine + A + S-adenosyl-L-homocysteine + 2 H(+). Catalyzes the methylthiolation of an aspartic acid residue of ribosomal protein uS12. This Cupriavidus taiwanensis (strain DSM 17343 / BCRC 17206 / CCUG 44338 / CIP 107171 / LMG 19424 / R1) (Ralstonia taiwanensis (strain LMG 19424)) protein is Ribosomal protein uS12 methylthiotransferase RimO.